A 125-amino-acid polypeptide reads, in one-letter code: Small ribosomal subunit protein uS13 (125 aa).

The segment at 91 to 125 (HRRGLPARGQRTRTNARTRKGKRKTVAGKKKAGKK) is disordered.

This sequence belongs to the universal ribosomal protein uS13 family. As to quaternary structure, part of the 30S ribosomal subunit. Forms a loose heterodimer with protein S19. Forms two bridges to the 50S subunit in the 70S ribosome.

In terms of biological role, located at the top of the head of the 30S subunit, it contacts several helices of the 16S rRNA. In the 70S ribosome it contacts the 23S rRNA (bridge B1a) and protein L5 of the 50S subunit (bridge B1b), connecting the 2 subunits; these bridges are implicated in subunit movement. Contacts the tRNAs in the A and P-sites. The chain is Small ribosomal subunit protein uS13 from Chloroherpeton thalassium (strain ATCC 35110 / GB-78).